The primary structure comprises 215 residues: Probable phosphoglycerate mutase GpmB (215 aa).

Substrate contacts are provided by residues Arg8–Asn15, Gln21–Gly22, Arg58, Arg60, Glu82–Met85, and Gly151–Ile152. His9 functions as the Tele-phosphohistidine intermediate in the catalytic mechanism. Glu82 functions as the Proton donor/acceptor in the catalytic mechanism.

Belongs to the phosphoglycerate mutase family. GpmB subfamily.

The catalysed reaction is (2R)-2-phosphoglycerate = (2R)-3-phosphoglycerate. Its pathway is carbohydrate degradation; glycolysis; pyruvate from D-glyceraldehyde 3-phosphate: step 3/5. This is Probable phosphoglycerate mutase GpmB from Serratia proteamaculans (strain 568).